A 302-amino-acid polypeptide reads, in one-letter code: Protoheme IX farnesyltransferase 1 (302 aa).

Transmembrane regions (helical) follow at residues 27-47 (VVAL…VTDF), 49-69 (WIQA…AAAF), 98-118 (SVAI…YAWV), 121-141 (LTAW…TMYL), 149-169 (IVIA…AVTG), 175-195 (AWLL…ALAI), 228-248 (LLTL…IYLF), and 281-301 (IYHL…GMVL).

This sequence belongs to the UbiA prenyltransferase family. Protoheme IX farnesyltransferase subfamily.

The protein localises to the cell inner membrane. It carries out the reaction heme b + (2E,6E)-farnesyl diphosphate + H2O = Fe(II)-heme o + diphosphate. Its pathway is porphyrin-containing compound metabolism; heme O biosynthesis; heme O from protoheme: step 1/1. Converts heme B (protoheme IX) to heme O by substitution of the vinyl group on carbon 2 of heme B porphyrin ring with a hydroxyethyl farnesyl side group. The sequence is that of Protoheme IX farnesyltransferase 1 from Vibrio parahaemolyticus serotype O3:K6 (strain RIMD 2210633).